The chain runs to 2230 residues: DNA polymerase epsilon catalytic subunit A (2230 aa).

The segment covering 1–19 (MPTRQPSKYGNKFRSSSAS) has biased composition (polar residues). Residues 1 to 24 (MPTRQPSKYGNKFRSSSASFKPKR) form a disordered region. 4 residues coordinate Zn(2+): Cys-2101, Cys-2104, Cys-2136, and Cys-2139. A CysA-type zinc finger spans residues 2101 to 2139 (CNACCLIRDLDLCRDEDVLPEMGSDPNKAAPKPWRCPFC). The [4Fe-4S] cluster site is built by Cys-2170, Cys-2173, Cys-2185, and Cys-2187. Positions 2170–2187 (CSKCGGLKISDFMEHCSC) match the CysB motif motif.

It belongs to the DNA polymerase type-B family. In terms of assembly, heterotetramer. Consists of 4 subunits: pol2, dpb2, dpb3 and dpb4. The cofactor is [4Fe-4S] cluster.

It localises to the nucleus. It carries out the reaction DNA(n) + a 2'-deoxyribonucleoside 5'-triphosphate = DNA(n+1) + diphosphate. Functionally, DNA polymerase II participates in chromosomal DNA replication. The sequence is that of DNA polymerase epsilon catalytic subunit A (pol2) from Aspergillus fumigatus (strain ATCC MYA-4609 / CBS 101355 / FGSC A1100 / Af293) (Neosartorya fumigata).